Consider the following 341-residue polypeptide: tRNA N6-adenosine threonylcarbamoyltransferase (341 aa).

Positions 111 and 115 each coordinate Fe cation. Residues 133–137, Asp166, Gly179, Asp183, and Asn271 contribute to the substrate site; that span reads VVSGG. A Fe cation-binding site is contributed by Asp299.

Belongs to the KAE1 / TsaD family. Requires Fe(2+) as cofactor.

Its subcellular location is the cytoplasm. The enzyme catalyses L-threonylcarbamoyladenylate + adenosine(37) in tRNA = N(6)-L-threonylcarbamoyladenosine(37) in tRNA + AMP + H(+). Required for the formation of a threonylcarbamoyl group on adenosine at position 37 (t(6)A37) in tRNAs that read codons beginning with adenine. Is involved in the transfer of the threonylcarbamoyl moiety of threonylcarbamoyl-AMP (TC-AMP) to the N6 group of A37, together with TsaE and TsaB. TsaD likely plays a direct catalytic role in this reaction. The chain is tRNA N6-adenosine threonylcarbamoyltransferase from Fusobacterium nucleatum subsp. nucleatum (strain ATCC 25586 / DSM 15643 / BCRC 10681 / CIP 101130 / JCM 8532 / KCTC 2640 / LMG 13131 / VPI 4355).